Consider the following 115-residue polypeptide: NADH-ubiquinone oxidoreductase chain 3 (115 aa).

3 helical membrane passes run 3 to 23 (FVLA…LTFW), 55 to 75 (FFLV…LLPL), and 84 to 104 (LPLM…GLTY).

It belongs to the complex I subunit 3 family. In terms of assembly, core subunit of respiratory chain NADH dehydrogenase (Complex I) which is composed of 45 different subunits. Interacts with TMEM186. Interacts with TMEM242.

The protein localises to the mitochondrion inner membrane. It carries out the reaction a ubiquinone + NADH + 5 H(+)(in) = a ubiquinol + NAD(+) + 4 H(+)(out). Its function is as follows. Core subunit of the mitochondrial membrane respiratory chain NADH dehydrogenase (Complex I) which catalyzes electron transfer from NADH through the respiratory chain, using ubiquinone as an electron acceptor. Essential for the catalytic activity of complex I. The polypeptide is NADH-ubiquinone oxidoreductase chain 3 (Pongo pygmaeus (Bornean orangutan)).